The following is a 591-amino-acid chain: L-fucose isomerase (591 aa).

Residues glutamate 337 and aspartate 361 each act as proton acceptor in the active site. Mn(2+) is bound by residues glutamate 337, aspartate 361, and histidine 528.

The protein belongs to the L-fucose isomerase family. In terms of assembly, homohexamer. The cofactor is Mn(2+).

The protein localises to the cytoplasm. The catalysed reaction is L-fucose = L-fuculose. It functions in the pathway carbohydrate degradation; L-fucose degradation; L-lactaldehyde and glycerone phosphate from L-fucose: step 1/3. Functionally, converts the aldose L-fucose into the corresponding ketose L-fuculose. This Escherichia coli O157:H7 (strain EC4115 / EHEC) protein is L-fucose isomerase.